Consider the following 20-residue polypeptide: Tetracycline resistance leader peptide (20 aa).

Positions 1 to 20 (MKCNKMNRVQLKEGSVSMTL) are disordered.

The sequence is that of Tetracycline resistance leader peptide (tetL) from Bacillus subtilis (strain 168).